The chain runs to 726 residues: Tripartite terminase subunit 1 (726 aa).

The segment at 189 to 217 (CMKCYEELTLTPNQGKSLRKRLHGKFCNH) adopts a C3H1-type zinc-finger fold. 626–633 (YNDVFGKR) is an ATP binding site.

The protein belongs to the herpesviridae TRM1 protein family. Associates with TRM2 and TRM3 to form the tripartite terminase complex. Interacts with portal protein.

The protein resides in the host nucleus. In terms of biological role, component of the molecular motor that translocates viral genomic DNA in empty capsid during DNA packaging. Forms a tripartite terminase complex together with TRM2 and TRM3 in the host cytoplasm. Once the complex reaches the host nucleus, it interacts with the capsid portal vertex. This portal forms a ring in which genomic DNA is translocated into the capsid. TRM1 carries an endonuclease activity that plays an important role for the cleavage of concatemeric viral DNA into unit length genomes. The polypeptide is Tripartite terminase subunit 1 (Human herpesvirus 6B (strain Z29) (HHV-6 variant B)).